The primary structure comprises 198 residues: ATP synthase protein MI25 (198 aa).

Residues 29-49 (ISIYNEEMIVALCFIGFIIFS) form a helical membrane-spanning segment.

This sequence belongs to the ATPase protein MI25 family. F-type ATPases have 2 components, CF(1) - the catalytic core - and CF(0) - the membrane proton channel. CF(1) has five subunits: alpha(3), beta(3), gamma(1), delta(1), epsilon(1). CF(0) has three main subunits: a, b and c.

The protein localises to the mitochondrion membrane. Functionally, this is one of the chains of the nonenzymatic component (CF(0) subunit) of the mitochondrial ATPase complex. The polypeptide is ATP synthase protein MI25 (Nicotiana tabacum (Common tobacco)).